The chain runs to 375 residues: Type II restriction enzyme ApaLI (375 aa).

The catalysed reaction is Endonucleolytic cleavage of DNA to give specific double-stranded fragments with terminal 5'-phosphates.. A subtype P restriction enzyme that recognizes the double-stranded sequence 5'-GTGCAC-3' and cleaves after G-1. This Acetobacter pasteurianus (Acetobacter turbidans) protein is Type II restriction enzyme ApaLI.